A 199-amino-acid polypeptide reads, in one-letter code: NAD(P)H dehydrogenase (quinone) (199 aa).

Positions 4–190 (VLVLYYSAYG…AGARYQGRRV (187 aa)) constitute a Flavodoxin-like domain. Residues 10–15 (SAYGHI) and 78–80 (TRF) contribute to the FMN site. NAD(+) is bound at residue tyrosine 12. Residue tryptophan 98 participates in substrate binding. Residues 113 to 119 (STATQHG) and histidine 134 contribute to the FMN site.

The protein belongs to the WrbA family. FMN serves as cofactor.

The catalysed reaction is a quinone + NADH + H(+) = a quinol + NAD(+). It carries out the reaction a quinone + NADPH + H(+) = a quinol + NADP(+). This Methylocella silvestris (strain DSM 15510 / CIP 108128 / LMG 27833 / NCIMB 13906 / BL2) protein is NAD(P)H dehydrogenase (quinone).